Reading from the N-terminus, the 337-residue chain is tRNA N6-adenosine threonylcarbamoyltransferase (337 aa).

Positions 110 and 114 each coordinate Fe cation. Substrate is bound by residues methionine 133–glycine 137, aspartate 166, glycine 179, aspartate 183, and asparagine 276. Fe cation is bound at residue aspartate 302.

Belongs to the KAE1 / TsaD family. The cofactor is Fe(2+).

It is found in the cytoplasm. The enzyme catalyses L-threonylcarbamoyladenylate + adenosine(37) in tRNA = N(6)-L-threonylcarbamoyladenosine(37) in tRNA + AMP + H(+). Its function is as follows. Required for the formation of a threonylcarbamoyl group on adenosine at position 37 (t(6)A37) in tRNAs that read codons beginning with adenine. Is involved in the transfer of the threonylcarbamoyl moiety of threonylcarbamoyl-AMP (TC-AMP) to the N6 group of A37, together with TsaE and TsaB. TsaD likely plays a direct catalytic role in this reaction. This Fervidobacterium nodosum (strain ATCC 35602 / DSM 5306 / Rt17-B1) protein is tRNA N6-adenosine threonylcarbamoyltransferase.